Reading from the N-terminus, the 1326-residue chain is F-box/WD repeat-containing protein 7 (1326 aa).

Disordered regions lie at residues 1-58 (MERG…AEVG), 123-187 (DSSS…IEDE), 318-351 (TVSN…ALSR), 399-549 (GSKA…SGCS), 615-642 (RSNP…RNGS), and 797-843 (TPRS…NPPP). A compositionally biased stretch (polar residues) spans 9–39 (SSESVTSAGERTQSAVTSSTSTWVKSQASTS). Residues 165-187 (NDDDDDEEPEPEEDDEEELIEDE) are compositionally biased toward acidic residues. The span at 320–348 (SNPSPAASANAAAPEEASTSNSSSTSSSA) shows a compositional bias: low complexity. Residues 403 to 464 (ANGSGTANSD…KLNLGSSLGA (62 aa)) show a composition bias toward polar residues. Positions 465–486 (SSCSQHRSGSSSTSKSMESSTS) are enriched in low complexity. A compositionally biased stretch (polar residues) spans 495 to 504 (VYTNTNSNDY). Low complexity-rich tracts occupy residues 510-520 (TTSGSSTSGGS), 528-546 (NVSA…SQES), and 616-631 (SNPP…GANP). 2 stretches are compositionally biased toward polar residues: residues 632–642 (TASVRQRRNGS) and 797–824 (TPRS…STPG). T813 is subject to Phosphothreonine. S825 is modified (phosphoserine). The region spanning 889 to 935 (RDFISLLPRELALFVLSYLEPKDLLRAAQTCRSWRFLCDDNLLWKEK) is the F-box domain. 7 WD repeats span residues 992 to 1030 (GHDD…CLRT), 1033 to 1070 (GHTG…CVHT), 1073 to 1110 (GHTS…CLHV), 1113 to 1150 (GHLA…CLHT), 1153 to 1190 (GHTN…CKHT), 1193 to 1232 (GHQS…QTLS), and 1236 to 1273 (KHHS…FIRN).

As to quaternary structure, part of a SCF E3 ubiquitin-protein ligase complex. Interacts with Myc and puf. Interacts with CycE. As to expression, expressed in follicle cell epithelium and imaginal disks, particularly in the morphogenetic furrow.

It is found in the nucleus. The protein operates within protein modification; protein ubiquitination. Functionally, substrate recognition component of a SCF (SKP1-CUL1-F-box protein) E3 ubiquitin-protein ligase complex which mediates the ubiquitination and subsequent proteasomal degradation of target proteins. Probably recognizes and binds to phosphorylated target proteins. In the wing and eye, negatively regulates cell growth and proliferation by mediating the degradation of Myc and cyclin E, respectively. Required for endocycles, but not mitosis in follicle cell epithelium. The protein is F-box/WD repeat-containing protein 7 of Drosophila melanogaster (Fruit fly).